A 649-amino-acid chain; its full sequence is Golgin subfamily A member 6-like protein 26 (649 aa).

Disordered stretches follow at residues 1–94 (MWPQ…HQEA), 300–330 (QEEK…RQEE), 358–440 (EKMH…EMWR), 455–572 (KEKM…REQE), and 584–620 (EQEE…MRRQ). Low complexity predominate over residues 10–23 (HPHLPTHPHLPTHP). Over residues 25–46 (MSKETRQSKLAEAKEQLTDHHP) the composition is skewed to basic and acidic residues. Polar residues-rich tracts occupy residues 47–57 (QTNPSVGTAAS) and 65–77 (NNGT…TSGG). Positions 80–94 (SPEDEQKASHQHQEA) are enriched in basic and acidic residues. The stretch at 151–644 (LEQALSAVAT…EEKMQEHQEH (494 aa)) forms a coiled coil.

It belongs to the GOLGA6 family.

This is Golgin subfamily A member 6-like protein 26 (GOLGA6L26) from Homo sapiens (Human).